Here is a 355-residue protein sequence, read N- to C-terminus: Peptide chain release factor 1 (355 aa).

N5-methylglutamine is present on Gln231. A disordered region spans residues 283–303; sequence LAKESEARKSQVGSGDRSERI.

This sequence belongs to the prokaryotic/mitochondrial release factor family. Methylated by PrmC. Methylation increases the termination efficiency of RF1.

It is found in the cytoplasm. Functionally, peptide chain release factor 1 directs the termination of translation in response to the peptide chain termination codons UAG and UAA. The chain is Peptide chain release factor 1 from Campylobacter lari (strain RM2100 / D67 / ATCC BAA-1060).